Consider the following 262-residue polypeptide: Abhydrolase domain-containing protein AKT2 (262 aa).

Residues 260-262 carry the Peroxisomal targeting signal type 1 motif; that stretch reads SKL.

Belongs to the AB hydrolase superfamily. AKT2 hydrolase family.

It localises to the peroxisome. The protein operates within mycotoxin biosynthesis. Functionally, abhydrolase domain-containing protein; part of the gene clusters that mediate the biosynthesis of the host-selective toxins (HSTs) AK-toxins responsible for Japanese pear black spot disease by the Japanese pear pathotype. AK-toxins are esters of 9,10-epoxy 8-hydroxy 9-methyldecatrienoic acid (EDA). On cellular level, AK-toxins affect plasma membrane of susceptible cells and cause a sudden increase in loss of K(+) after a few minutes of toxin treatment. The acyl-CoA ligase AKT1, the hydrolase AKT2 and enoyl-CoA hydratase AKT3 are all involved in the biosynthesis of the AK-, AF- and ACT-toxin common 9,10-epoxy-8-hydroxy-9-methyl-decatrienoic acid (EDA) structural moiety. Part of the EDA biosynthesis occurs in the peroxisome since these 3 enzymes are localized in peroxisomes. The exact roles of the 3 enzymes, as well as of additional AK-toxin clusters enzymes, including AKT4, AKT6 and AKTS1, have still to be elucidated. The Cytochrome P450 monooxygenase AKT7 on the other side functions to limit production of EDA and AK-toxin, probably via the catalysis of a side reaction of EDA or its precursor. This is Abhydrolase domain-containing protein AKT2 from Alternaria alternata (Alternaria rot fungus).